Here is a 397-residue protein sequence, read N- to C-terminus: NADH-quinone oxidoreductase subunit H 1 (397 aa).

Transmembrane regions (helical) follow at residues 7 to 27 (FIFI…TTLA), 84 to 104 (PFLA…GPVI), 120 to 140 (IGVL…ALAG), 156 to 176 (SAQM…PLLI), 198 to 218 (LLSG…AAFA), 258 to 278 (MITV…APWP), 279 to 299 (AAYG…LVLL), 313 to 333 (TFPA…LPMV), 337 to 357 (LLPL…FMWI), and 376 to 396 (FLFP…AWTT).

This sequence belongs to the complex I subunit 1 family. As to quaternary structure, NDH-1 is composed of 14 different subunits. Subunits NuoA, H, J, K, L, M, N constitute the membrane sector of the complex.

The protein localises to the cell inner membrane. The enzyme catalyses a quinone + NADH + 5 H(+)(in) = a quinol + NAD(+) + 4 H(+)(out). NDH-1 shuttles electrons from NADH, via FMN and iron-sulfur (Fe-S) centers, to quinones in the respiratory chain. The immediate electron acceptor for the enzyme in this species is believed to be ubiquinone. Couples the redox reaction to proton translocation (for every two electrons transferred, four hydrogen ions are translocated across the cytoplasmic membrane), and thus conserves the redox energy in a proton gradient. This subunit may bind ubiquinone. The polypeptide is NADH-quinone oxidoreductase subunit H 1 (Solibacter usitatus (strain Ellin6076)).